The following is a 109-amino-acid chain: Ribulose bisphosphate carboxylase small subunit (109 aa).

This sequence belongs to the RuBisCO small chain family. As to quaternary structure, heterohexadecamer of 8 large and 8 small subunits. Forms complexes of many stoichiometries with Raf1 and RbcL.

Its subcellular location is the carboxysome. Its function is as follows. RuBisCO catalyzes two reactions: the carboxylation of D-ribulose 1,5-bisphosphate, the primary event in carbon dioxide fixation, as well as the oxidative fragmentation of the pentose substrate in the photorespiration process. Both reactions occur simultaneously and in competition at the same active site. Although the small subunit is not catalytic it is essential for maximal activity. This chain is Ribulose bisphosphate carboxylase small subunit, found in Nostoc sp. (strain PCC 7120 / SAG 25.82 / UTEX 2576).